A 199-amino-acid polypeptide reads, in one-letter code: Recombination protein RecR (199 aa).

A C4-type zinc finger spans residues 58–73 (CQRCFHLSSEDLCNIC). One can recognise a Toprim domain in the interval 81–175 (QTICVVADPR…RVTRIAFGLP (95 aa)).

Belongs to the RecR family.

In terms of biological role, may play a role in DNA repair. It seems to be involved in an RecBC-independent recombinational process of DNA repair. It may act with RecF and RecO. In Synechococcus elongatus (strain ATCC 33912 / PCC 7942 / FACHB-805) (Anacystis nidulans R2), this protein is Recombination protein RecR.